The sequence spans 272 residues: Acetylglutamate kinase (272 aa).

Substrate-binding positions include 46 to 47 (GA), Arg68, and Asn166.

It belongs to the acetylglutamate kinase family. ArgB subfamily.

The protein localises to the cytoplasm. It carries out the reaction N-acetyl-L-glutamate + ATP = N-acetyl-L-glutamyl 5-phosphate + ADP. It participates in amino-acid biosynthesis; L-arginine biosynthesis; N(2)-acetyl-L-ornithine from L-glutamate: step 2/4. Its function is as follows. Catalyzes the ATP-dependent phosphorylation of N-acetyl-L-glutamate. The protein is Acetylglutamate kinase of Dehalococcoides mccartyi (strain ATCC BAA-2266 / KCTC 15142 / 195) (Dehalococcoides ethenogenes (strain 195)).